The primary structure comprises 104 residues: Cell cycle protein GpsB (104 aa).

A coiled-coil region spans residues 34-72 (LDVVIQDYEVFQKKIERLEQEIHQLRTEAKRAASERQTR). Basic and acidic residues predominate over residues 60 to 71 (TEAKRAASERQT). The segment at 60–82 (TEAKRAASERQTRHQTSPSVGST) is disordered. Residues 73–82 (HQTSPSVGST) show a composition bias toward polar residues.

It belongs to the GpsB family. Forms polymers through the coiled coil domains. Interacts with PBP1, MreC and EzrA.

The protein resides in the cytoplasm. Its function is as follows. Divisome component that associates with the complex late in its assembly, after the Z-ring is formed, and is dependent on DivIC and PBP2B for its recruitment to the divisome. Together with EzrA, is a key component of the system that regulates PBP1 localization during cell cycle progression. Its main role could be the removal of PBP1 from the cell pole after pole maturation is completed. Also contributes to the recruitment of PBP1 to the division complex. Not essential for septum formation. The sequence is that of Cell cycle protein GpsB from Halalkalibacterium halodurans (strain ATCC BAA-125 / DSM 18197 / FERM 7344 / JCM 9153 / C-125) (Bacillus halodurans).